We begin with the raw amino-acid sequence, 511 residues long: MASDSSFPGASSNVAEYSVSEISGALKRTVEDMFGHVRVRGEISGYRGPHSSGHAYFALKDDRARLEAVIWRGSMSRLRFRPEEGMEVIATGKLTTYPGSSKYQIVIEQMEPAGAGALMALLEERKQRLAAEGLFDPALKQLLPFMPRVIGVVTSPTGAVIRDIIHRISDRYPLRVIVWPVRVQGDTCGPEVATAVNGFNTLPDDGPIPRPDVLIVARGGGSLEDLWGFNDEIVVRAVAASHIPVISAVGHETDWTLIDLAADMRAPTPTGAAEMAVPVKADLQASLASQSARLSSAMSRFFDQKRQAHRAAARAMPSADQLLALPRRRFDEAASRLTRALFVNTQKKRVHFDGHARQLSPRLLQRRLVELERGVTMLGQRLPRALEAFLRERRTAFTHRANRLSPEPILRRTRLTGSTLEQLDRRRDQAVRLLIERVKRRSQELDRLMRTLSYESVLERGFAVVFDAQGKPVKQAAAVSPDDALSVRFRDGDVGVVARAGLTIPDPTKGQ.

This sequence belongs to the XseA family. As to quaternary structure, heterooligomer composed of large and small subunits.

The protein localises to the cytoplasm. The enzyme catalyses Exonucleolytic cleavage in either 5'- to 3'- or 3'- to 5'-direction to yield nucleoside 5'-phosphates.. Its function is as follows. Bidirectionally degrades single-stranded DNA into large acid-insoluble oligonucleotides, which are then degraded further into small acid-soluble oligonucleotides. The chain is Exodeoxyribonuclease 7 large subunit from Brucella ovis (strain ATCC 25840 / 63/290 / NCTC 10512).